The primary structure comprises 227 residues: SPbeta prophage-derived uncharacterized membrane protein YomJ (227 aa).

The next 2 membrane-spanning stretches (helical) occupy residues 16 to 36 (LFFL…IVGL) and 131 to 151 (GIVA…GLSA).

It localises to the cell membrane. This Bacillus subtilis (strain 168) protein is SPbeta prophage-derived uncharacterized membrane protein YomJ (yomJ).